Reading from the N-terminus, the 448-residue chain is MNAYELNMDGLVGQTHHYAGLSSGNIASTNNALSISNPQAAARQGLEKMRQLYNMGLKQGLLPPHQRPNLNLLYQLGFKGSPSEQINKAYKTAPELLSACYSASSMWTANAATVSASVDTEDNKVHFTAANLISNLHRHQEADFSKKLLEFIFSNSDYFNHHPLLPKSMGTSDEGAANHNRLCQSHAHSGINLFVYGKKVLGNHQFEQSPIKYPARQTKEASEAIARNHLLNPERVIFACQNPLAIDQGVFHNDVISVANEHVFLVHEEAFYNQAYVLDQLKEKADFPLVIIQISKEQISVSEAVDTYLFNSQLITLPDQKNMILIAPAECQANLKVKTCIDGLVADSQNPINSVYYLDLKQSMRNGGGPACLRLRVPLNDYELKAMHQGILIDNDLLDILDKWVLKYYRTELKISDLADPQLLYECLDALDELTQILKLGSIYPFQS.

Residues 19-28 (AGLSSGNIAS), Asn-110, and 137-138 (HR) contribute to the substrate site. Residue Glu-174 is part of the active site. Substrate is bound at residue Arg-216. His-252 is an active-site residue. 2 residues coordinate substrate: Asp-254 and Asn-366. Cys-372 serves as the catalytic Nucleophile.

The protein belongs to the succinylarginine dihydrolase family. Homodimer.

The catalysed reaction is N(2)-succinyl-L-arginine + 2 H2O + 2 H(+) = N(2)-succinyl-L-ornithine + 2 NH4(+) + CO2. The protein operates within amino-acid degradation; L-arginine degradation via AST pathway; L-glutamate and succinate from L-arginine: step 2/5. In terms of biological role, catalyzes the hydrolysis of N(2)-succinylarginine into N(2)-succinylornithine, ammonia and CO(2). This Legionella pneumophila (strain Paris) protein is N-succinylarginine dihydrolase.